Consider the following 922-residue polypeptide: MATTDVFIISSSPPRRLVSHIASSPPLPSLDKMVNGKKASNLRQGSSVAPIPTGATIFASASTLLRESSSGSLQGFDNARSFVTSAVQDENDLKKSAKPKAPRKTAPKKEDGTVEKVAKASRKTVKKKDKDVSGDFVDELVGEAAEIIAEKKPRKPRAKKGDNAEGKSGSVAEATVEKKPRKSRAKKAVDATGEDLKEKVPRKSRAKKTDVEAGIETVPKEKAVRKPRAKNSDLDSNLQSKMVKGRVTKSAVNASNTHKVETSKADTGNKHFAPNPIVEDIVADEGFGLVEAIRRRTNWTPPKSTKVPIDLEDSPEAQESDTSKGFAELLGSFGYSSYQADSIEKRISSGVSNGAAATRKRKLIEMVTTNIPREPGSKTTKEKAVKKKARTLTDLATSAYATAEDDDNLLDAPTPLLQYFPHAAPEGSTNNGFKIPPKPRSKSPMKRVQKSKTGSAEEPILLSPESAMKQVSNQDFVFGTSSQLAREDSPSLLRDLHDAMQASNELDDYDDPFVSPPTKIAERGKAVVAAKRNLWSIAARDNHGDLMDVETIDLAHTPVAKPDRIMLSQKPSSLVTPGKDDWFDIDEIEDNRPPSTQVPLRETGPIERSINFQLLDSPTQPKNTSKDSSKVFPQKKGTKSLVDKSTTPKKVDASKMPDYESFTTPQLTREIQKYKFKQIKSRKRMIDLLIQCYESQNRPALGVLQGNIPIITQNSLEKSKDVADSSTQVKPTIPSPRRGRAKKVTTSTASLPKSKAKSKMTDTVAFLEMDSDTPLSKIRTPQKSRKGKQPLEDIFDSDHPITPSPPRRSDSQIRKISKALELSPDNNQDDEAQQAQLFTHIYTAITKAPPSQDPFNPSWHEKILLYDPIILEDLASWLNTGALSKVGWDEEVAPLEVKKWCESKSICCLWKENQGGGARSRY.

Disordered regions lie at residues 86-134 (AVQD…DVSG), 146-273 (EIIA…KHFA), 299-323 (WTPP…SDTS), 367-389 (VTTN…KKKA), 420-458 (FPHA…SAEE), 612-657 (FQLL…SKMP), and 717-813 (EKSK…DSQI). Basic residues predominate over residues 96–106 (SAKPKAPRKTA). Basic and acidic residues-rich tracts occupy residues 107-118 (PKKEDGTVEKVA), 194-211 (EDLK…KTDV), and 258-269 (HKVETSKADTGN). Residues 310 to 319 (DLEDSPEAQE) are compositionally biased toward acidic residues. A compositionally biased stretch (basic residues) spans 437 to 450 (PKPRSKSPMKRVQK). Polar residues predominate over residues 612-623 (FQLLDSPTQPKN).

This sequence belongs to the SLX4 family. Forms a heterodimer with slx1. In terms of processing, phosphorylated in response to DNA damage.

It is found in the nucleus. Functionally, regulatory subunit of the slx1-slx4 structure-specific endonuclease that resolves DNA secondary structures generated during DNA repair and recombination. Has endonuclease activity towards branched DNA substrates, introducing single-strand cuts in duplex DNA close to junctions with ss-DNA. This chain is Structure-specific endonuclease subunit slx4 (slx4), found in Sclerotinia sclerotiorum (strain ATCC 18683 / 1980 / Ss-1) (White mold).